An 88-amino-acid polypeptide reads, in one-letter code: Small ribosomal subunit protein bS16 (88 aa).

Belongs to the bacterial ribosomal protein bS16 family.

The chain is Small ribosomal subunit protein bS16 from Staphylococcus saprophyticus subsp. saprophyticus (strain ATCC 15305 / DSM 20229 / NCIMB 8711 / NCTC 7292 / S-41).